We begin with the raw amino-acid sequence, 874 residues long: MKTTSEIRQSFLDFFNSKGHTVVPSSALVPENDPTLLFTNAGMNQFKDVFLGLEKRPYTRATTAQRCVRAGGKHNDLENVGYTARHHTFFEMMGNFSFGDYFKHDAIQFAWEFLTSEKWLHLPKEKLYVTVYETDDEAYDIWHKTVGVPSEHIIRIGDNKGVPYASDNFWAMGDTGPCGPCTEIFYDHGESFWGGLPGTAEEDGDRYIEVWNIVFMQFNRQADGTLAKLPKPSVDTGMGLERMTAVMQHVNSNYETDIFQTLIKEVATLLHVADLDNKSLRVIADHIRACSYLIVDGVIPSNEGRGYVLRRIIRRAVRHGNLLGAKEAFFYKLVPTLAKVMGQAGEILTDKQSYIQKTLKTEEEQFARTLERGLALLEEALTKVENQTLSGEVAFKLYDTYGFPLDLTADVCRERDIVIDEASFEIEMTAQRERAKSSSNFGADYNSVIKVEAETAFIGYDCFNAEAKVIALFSNGQAVDKVQSGESAVVVLDKTPFYAEMGGQVGDSGLITTAFCQFAVADTQKYGQVFGHIGQVVSGSLAIGDIISAQVDIARRQAITANHSATHLLHSALRQVLGEHVVQKGSLVSENVLRFDFSQSQAVSKAQLEEIERIVNRQIRQNLAVTIETMDIETAKEKGTVALFGEKYGDVVRVVGMTDFSIELCGGTHVKHTGEIGLFKLISESAVAAGIRRVEALTAENAINWLHNQQKIIHQSAELLKTDSLSLVDKIYQLQDKIKRNEKELQHFKDKLAAQAGAELAKQVVQINGINVVIQKLEGIESKSLRTMVDDLKNQLSSVIVVFGSVSADKVNLIVGVTKDLSNKVNAGELVGLIAQQVGGKGGGRPDMAMAGGTEPQHLDTALAFAKQWIHSKL.

The Zn(2+) site is built by His563, His567, Cys665, and His669.

Belongs to the class-II aminoacyl-tRNA synthetase family. Requires Zn(2+) as cofactor.

Its subcellular location is the cytoplasm. The enzyme catalyses tRNA(Ala) + L-alanine + ATP = L-alanyl-tRNA(Ala) + AMP + diphosphate. In terms of biological role, catalyzes the attachment of alanine to tRNA(Ala) in a two-step reaction: alanine is first activated by ATP to form Ala-AMP and then transferred to the acceptor end of tRNA(Ala). Also edits incorrectly charged Ser-tRNA(Ala) and Gly-tRNA(Ala) via its editing domain. This chain is Alanine--tRNA ligase, found in Haemophilus ducreyi (strain 35000HP / ATCC 700724).